The following is a 41-amino-acid chain: Large ribosomal subunit protein bL36 (41 aa).

It belongs to the bacterial ribosomal protein bL36 family.

This Azorhizobium caulinodans (strain ATCC 43989 / DSM 5975 / JCM 20966 / LMG 6465 / NBRC 14845 / NCIMB 13405 / ORS 571) protein is Large ribosomal subunit protein bL36.